The primary structure comprises 175 residues: Mating-type protein ALPHA1 (175 aa).

Positions 88-144 (SSKKYLNSFMAFRAYYSQFGSGVKQNVLSSLLAEEWHADKMQHGIWDYFAQQYNFIN) form a DNA-binding region, alpha box.

This sequence belongs to the MATALPHA1 family. In terms of assembly, binds DNA with a high specificity in complex with an MCM1 dimer. Interacts with STE12.

Its subcellular location is the nucleus. In terms of biological role, mating type proteins are sequence specific DNA-binding proteins that act as master switches in yeast differentiation by controlling gene expression in a cell type-specific fashion. Transcriptional coactivator that, in alpha-cells, binds cooperatively with MCM1 and STE12 to a DNA sequence termed the QP' element, to activate the transcription of alpha-specific genes. This chain is Mating-type protein ALPHA1 (MATALPHA1), found in Saccharomyces cerevisiae (strain ATCC 204508 / S288c) (Baker's yeast).